The sequence spans 163 residues: ATP synthase subunit b', chloroplastic (163 aa).

Residues 26–46 (ATLPLMALQFILLTVILTFVF) traverse the membrane as a helical segment.

Belongs to the ATPase B chain family. F-type ATPases have 2 components, F(1) - the catalytic core - and F(0) - the membrane proton channel. F(1) has five subunits: alpha(3), beta(3), gamma(1), delta(1), epsilon(1). F(0) has four main subunits: a(1), b(1), b'(1) and c(10-14). The alpha and beta chains form an alternating ring which encloses part of the gamma chain. F(1) is attached to F(0) by a central stalk formed by the gamma and epsilon chains, while a peripheral stalk is formed by the delta, b and b' chains.

It localises to the plastid. It is found in the chloroplast thylakoid membrane. Functionally, f(1)F(0) ATP synthase produces ATP from ADP in the presence of a proton or sodium gradient. F-type ATPases consist of two structural domains, F(1) containing the extramembraneous catalytic core and F(0) containing the membrane proton channel, linked together by a central stalk and a peripheral stalk. During catalysis, ATP synthesis in the catalytic domain of F(1) is coupled via a rotary mechanism of the central stalk subunits to proton translocation. Its function is as follows. Component of the F(0) channel, it forms part of the peripheral stalk, linking F(1) to F(0). The b'-subunit is a diverged and duplicated form of b found in plants and photosynthetic bacteria. The chain is ATP synthase subunit b', chloroplastic from Ochrosphaera neapolitana.